A 267-amino-acid polypeptide reads, in one-letter code: GTP cyclohydrolase MptA (267 aa).

This sequence belongs to the GTP cyclohydrolase IV family. Homodimer. Requires Fe(2+) as cofactor.

The enzyme catalyses GTP + H2O = 7,8-dihydroneopterin 2',3'-cyclic phosphate + formate + diphosphate + H(+). The protein operates within cofactor biosynthesis; 5,6,7,8-tetrahydromethanopterin biosynthesis. Its function is as follows. Converts GTP to 7,8-dihydro-D-neopterin 2',3'-cyclic phosphate, the first intermediate in the biosynthesis of coenzyme methanopterin. This is GTP cyclohydrolase MptA from Pyrococcus furiosus (strain ATCC 43587 / DSM 3638 / JCM 8422 / Vc1).